We begin with the raw amino-acid sequence, 189 residues long: MNPVATLFLAFAMSTDAFAAAIGKGATLNRPHWREAVRTGLIFGVIEALTPLVGWFLGKAAAQYVSAWDHWIAFSLLLVLGARMVFNSFNTKEVEETKPSAHSFWLLALTGFATSIDAMAVGAGLAFVDVNIYSTAAAIGLATMAMVTIGVMLGRVIGHVAGRRAELAGGIVLIGIGSTILAEHLNIFG.

The next 6 helical transmembrane spans lie at 3–23 (PVAT…AAIG), 41–61 (LIFG…GKAA), 62–82 (AQYV…VLGA), 104–124 (FWLL…VGAG), 132–152 (IYST…IGVM), and 168–188 (AGGI…LNIF).

Belongs to the MntP (TC 9.B.29) family.

The protein localises to the cell inner membrane. Functionally, probably functions as a manganese efflux pump. The sequence is that of Putative manganese efflux pump MntP from Paraburkholderia phytofirmans (strain DSM 17436 / LMG 22146 / PsJN) (Burkholderia phytofirmans).